The primary structure comprises 216 residues: Uracil-DNA glycosylase (216 aa).

The Proton acceptor role is filled by aspartate 59.

Belongs to the uracil-DNA glycosylase (UDG) superfamily. UNG family.

The protein resides in the cytoplasm. It carries out the reaction Hydrolyzes single-stranded DNA or mismatched double-stranded DNA and polynucleotides, releasing free uracil.. Its function is as follows. Excises uracil residues from the DNA which can arise as a result of misincorporation of dUMP residues by DNA polymerase or due to deamination of cytosine. The protein is Uracil-DNA glycosylase of Idiomarina loihiensis (strain ATCC BAA-735 / DSM 15497 / L2-TR).